The following is a 355-amino-acid chain: MSKSSIYGLTYEKLKDWLIEHGEKRFRAEQVWNWLYKKRINSFDEMNNVNQSAIQLLKDNFVLHTMGEEIRQESQDGTIKFLFKLEDGNLIETVLMRFHYGLSVCVTTQVGCNIGCTFCASGLLRKSRDLSSGEVVEQIMNVQKHLDERGEKDRVSHIVVMGIGEPFDNYNNLMDFLYTVNDDRGLNIGARHITVSTSGLAHKIYEFADDPIQVNLAISLHAPNDELRTKIMKINRAFPIDKLMKSVDYYLQKKNRRITYEYIMLDDVNDHKKEAIELANLIKNHRHLAYVNLIPYNTVDEHIDYRRSKSENIQAFYETLTELGINCGVRWENGADIDAACGQLRSKQIKKSKAV.

The active-site Proton acceptor is the E92. The Radical SAM core domain maps to 98-330; that stretch reads FHYGLSVCVT…TELGINCGVR (233 aa). A disulfide bridge links C105 with C341. Positions 112, 116, and 119 each coordinate [4Fe-4S] cluster. S-adenosyl-L-methionine is bound by residues 164-165, S196, 219-221, and N297; these read GE and SLH. The S-methylcysteine intermediate role is filled by C341.

Belongs to the radical SAM superfamily. RlmN family. Requires [4Fe-4S] cluster as cofactor.

It is found in the cytoplasm. The enzyme catalyses adenosine(2503) in 23S rRNA + 2 reduced [2Fe-2S]-[ferredoxin] + 2 S-adenosyl-L-methionine = 2-methyladenosine(2503) in 23S rRNA + 5'-deoxyadenosine + L-methionine + 2 oxidized [2Fe-2S]-[ferredoxin] + S-adenosyl-L-homocysteine. It catalyses the reaction adenosine(37) in tRNA + 2 reduced [2Fe-2S]-[ferredoxin] + 2 S-adenosyl-L-methionine = 2-methyladenosine(37) in tRNA + 5'-deoxyadenosine + L-methionine + 2 oxidized [2Fe-2S]-[ferredoxin] + S-adenosyl-L-homocysteine. Functionally, specifically methylates position 2 of adenine 2503 in 23S rRNA and position 2 of adenine 37 in tRNAs. The chain is Probable dual-specificity RNA methyltransferase RlmN from Oceanobacillus iheyensis (strain DSM 14371 / CIP 107618 / JCM 11309 / KCTC 3954 / HTE831).